The primary structure comprises 574 residues: Transmembrane protein 108 (574 aa).

A helical transmembrane segment spans residues 9 to 29; it reads YCQLLSFLLTLALTKALVLAV. The tract at residues 31-169 is interaction with SH3GL2; the sequence is EPSPRESLQT…ATTRRPPRPP (139 aa). Disordered regions lie at residues 32–352 and 364–417; these read PSPR…SGVF and DATV…PRPL. The span at 58–86 shows a compositional bias: polar residues; it reads TRLSSVLTLNPTPDGPSSQAAATLETTVS. The span at 132-160 shows a compositional bias: low complexity; that stretch reads LPPGDATPTTTLPTKPAGTTSRPTVAPRA. The tract at residues 173–406 is interaction with DST (isoform 1); that stretch reads RKGAGGSTRT…SPAEEEAEAS (234 aa). The segment covering 245–271 has biased composition (polar residues); the sequence is FSSTQPQTVSPATAPRSTSRVPPTTSL. A compositionally biased stretch (low complexity) spans 292 to 312; that stretch reads TSPGGEPAATAATGAPASTQP. Over residues 316-332 the composition is skewed to polar residues; sequence PSQSPHGDVQDSASHSD. Residues 468-488 traverse the membrane as a helical segment; sequence IAWVIVAISVPISSCSVLLTV. Residues 489–574 are interaction with CYFIP2; that stretch reads CCMRRKKKTA…FVGNDQVSEI (86 aa).

Interacts with DST (isoform 1). Interacts with SH3GL2. Interacts (via N-terminus) with CYFIP1 and CYFIP2; the interactions associate TMEM108 with the WAVE1 complex. Glycosylated. As to expression, expressed in the nervous system tissues, such as hippocampus and spinal cord, is barely detectable in peripheral tissues such as heart, lung, liver, kidney and muscle. In brain, highly expressed in dentate gyrus neurons and expressed in cortex, olfactory bulb, ammon's horn, cerebellum, hypothalamus and striatum.

The protein resides in the membrane. It localises to the postsynaptic density. Its subcellular location is the endosome membrane. It is found in the cell projection. The protein localises to the axon. The protein resides in the dendrite. It localises to the early endosome. Transmembrane protein required for proper cognitive functions. Involved in the development of dentate gyrus (DG) neuron circuitry, is necessary for AMPA receptors surface expression and proper excitatory postsynaptic currents of DG granule neurons. Regulates the organization and stability of the microtubule network of sensory neurons to allow axonal transport. Through the interaction with DST, mediates the docking of the dynein/dynactin motor complex to vesicle cargos for retrograde axonal transport. In hippocampal neurons, required for BDNF-dependent dendrite outgrowth. Cooperates with SH3GL2 and recruits the WAVE1 complex to facilitate actin-dependent BDNF:NTRK2 early endocytic trafficking and mediate signaling from early endosomes. This is Transmembrane protein 108 from Mus musculus (Mouse).